A 412-amino-acid chain; its full sequence is 4-hydroxyphenylpyruvate dioxygenase (412 aa).

VOC domains follow at residues 31 to 179 and 209 to 369; these read GYDH…LISR and RIDH…LFTK. Fe cation is bound by residues H212, H295, and E380.

Belongs to the 4HPPD family. Requires Fe cation as cofactor.

The catalysed reaction is 3-(4-hydroxyphenyl)pyruvate + O2 = homogentisate + CO2. It participates in amino-acid degradation; L-phenylalanine degradation; acetoacetate and fumarate from L-phenylalanine: step 3/6. In Neurospora crassa (strain ATCC 24698 / 74-OR23-1A / CBS 708.71 / DSM 1257 / FGSC 987), this protein is 4-hydroxyphenylpyruvate dioxygenase.